The sequence spans 313 residues: Porphobilinogen deaminase (313 aa).

At C241 the chain carries S-(dipyrrolylmethanemethyl)cysteine.

The protein belongs to the HMBS family. Monomer. It depends on dipyrromethane as a cofactor.

It carries out the reaction 4 porphobilinogen + H2O = hydroxymethylbilane + 4 NH4(+). The protein operates within porphyrin-containing compound metabolism; protoporphyrin-IX biosynthesis; coproporphyrinogen-III from 5-aminolevulinate: step 2/4. It functions in the pathway porphyrin-containing compound metabolism; chlorophyll biosynthesis. Tetrapolymerization of the monopyrrole PBG into the hydroxymethylbilane pre-uroporphyrinogen in several discrete steps. This Chlorobium phaeobacteroides (strain BS1) protein is Porphobilinogen deaminase.